Consider the following 335-residue polypeptide: 4-hydroxy-3-methylbut-2-enyl diphosphate reductase 2 (335 aa).

Cys-37 is a [4Fe-4S] cluster binding site. Residues His-66 and His-99 each contribute to the (2E)-4-hydroxy-3-methylbut-2-enyl diphosphate site. Positions 66 and 99 each coordinate dimethylallyl diphosphate. Isopentenyl diphosphate-binding residues include His-66 and His-99. Cys-121 is a [4Fe-4S] cluster binding site. His-149 lines the (2E)-4-hydroxy-3-methylbut-2-enyl diphosphate pocket. His-149 is a binding site for dimethylallyl diphosphate. His-149 serves as a coordination point for isopentenyl diphosphate. Glu-151 serves as the catalytic Proton donor. A (2E)-4-hydroxy-3-methylbut-2-enyl diphosphate-binding site is contributed by Thr-189. Cys-219 is a binding site for [4Fe-4S] cluster. Residues Ser-247, Ser-248, Asn-249, and Ser-292 each coordinate (2E)-4-hydroxy-3-methylbut-2-enyl diphosphate. 4 residues coordinate dimethylallyl diphosphate: Ser-247, Ser-248, Asn-249, and Ser-292. 4 residues coordinate isopentenyl diphosphate: Ser-247, Ser-248, Asn-249, and Ser-292.

The protein belongs to the IspH family. The cofactor is [4Fe-4S] cluster.

The enzyme catalyses isopentenyl diphosphate + 2 oxidized [2Fe-2S]-[ferredoxin] + H2O = (2E)-4-hydroxy-3-methylbut-2-enyl diphosphate + 2 reduced [2Fe-2S]-[ferredoxin] + 2 H(+). It catalyses the reaction dimethylallyl diphosphate + 2 oxidized [2Fe-2S]-[ferredoxin] + H2O = (2E)-4-hydroxy-3-methylbut-2-enyl diphosphate + 2 reduced [2Fe-2S]-[ferredoxin] + 2 H(+). Its pathway is isoprenoid biosynthesis; dimethylallyl diphosphate biosynthesis; dimethylallyl diphosphate from (2E)-4-hydroxy-3-methylbutenyl diphosphate: step 1/1. It functions in the pathway isoprenoid biosynthesis; isopentenyl diphosphate biosynthesis via DXP pathway; isopentenyl diphosphate from 1-deoxy-D-xylulose 5-phosphate: step 6/6. Functionally, catalyzes the conversion of 1-hydroxy-2-methyl-2-(E)-butenyl 4-diphosphate (HMBPP) into a mixture of isopentenyl diphosphate (IPP) and dimethylallyl diphosphate (DMAPP). Acts in the terminal step of the DOXP/MEP pathway for isoprenoid precursor biosynthesis. Has a higher activity compared with LytB2. Is essential for M.tuberculosis growth in vitro. The polypeptide is 4-hydroxy-3-methylbut-2-enyl diphosphate reductase 2 (Mycobacterium tuberculosis (strain ATCC 25618 / H37Rv)).